A 131-amino-acid polypeptide reads, in one-letter code: Sec-independent protein translocase protein TatB (131 aa).

Residues 1 to 21 (MFDISFAELVVVGIVALIVIG) form a helical membrane-spanning segment. Polar residues-rich tracts occupy residues 71–93 (NSFE…TQSA) and 111–131 (PVNT…QPNS). Residues 71–131 (NSFENSVRSE…APAEPRQPNS (61 aa)) are disordered.

This sequence belongs to the TatB family. In terms of assembly, the Tat system comprises two distinct complexes: a TatABC complex, containing multiple copies of TatA, TatB and TatC subunits, and a separate TatA complex, containing only TatA subunits. Substrates initially bind to the TatABC complex, which probably triggers association of the separate TatA complex to form the active translocon.

Its subcellular location is the cell inner membrane. Part of the twin-arginine translocation (Tat) system that transports large folded proteins containing a characteristic twin-arginine motif in their signal peptide across membranes. Together with TatC, TatB is part of a receptor directly interacting with Tat signal peptides. TatB may form an oligomeric binding site that transiently accommodates folded Tat precursor proteins before their translocation. This is Sec-independent protein translocase protein TatB from Nitrosomonas europaea (strain ATCC 19718 / CIP 103999 / KCTC 2705 / NBRC 14298).